The chain runs to 315 residues: Aspartate carbamoyltransferase catalytic subunit (315 aa).

Arg-65 and Thr-66 together coordinate carbamoyl phosphate. Lys-93 provides a ligand contact to L-aspartate. Positions 115, 145, and 148 each coordinate carbamoyl phosphate. L-aspartate is bound by residues Arg-179 and Arg-234. Carbamoyl phosphate is bound by residues Gly-275 and Pro-276.

This sequence belongs to the aspartate/ornithine carbamoyltransferase superfamily. ATCase family. As to quaternary structure, heterododecamer (2C3:3R2) of six catalytic PyrB chains organized as two trimers (C3), and six regulatory PyrI chains organized as three dimers (R2).

The enzyme catalyses carbamoyl phosphate + L-aspartate = N-carbamoyl-L-aspartate + phosphate + H(+). It participates in pyrimidine metabolism; UMP biosynthesis via de novo pathway; (S)-dihydroorotate from bicarbonate: step 2/3. Its function is as follows. Catalyzes the condensation of carbamoyl phosphate and aspartate to form carbamoyl aspartate and inorganic phosphate, the committed step in the de novo pyrimidine nucleotide biosynthesis pathway. This Xanthomonas oryzae pv. oryzae (strain MAFF 311018) protein is Aspartate carbamoyltransferase catalytic subunit.